Reading from the N-terminus, the 331-residue chain is Olfactory receptor 7E178 (331 aa).

Over 1–47 (MMDRYSFIMHQHRDDTVWCPSKIEEQNITRISEFHLMGLSDDLQLQP) the chain is Extracellular. N27 carries N-linked (GlcNAc...) asparagine glycosylation. Residues 48 to 68 (ILFGLFLSMYLVTLLGNLLII) traverse the membrane as a helical segment. The Cytoplasmic portion of the chain corresponds to 69–80 (LTVSSDSHLHSP). Residues 81-100 (MYFFLSNLSLADVSFTSTTL) traverse the membrane as a helical segment. Topologically, residues 101-119 (PKMIVDIQTHNRAISYSGC) are extracellular. The cysteines at positions 119 and 201 are disulfide-linked. Residues 120-140 (LTQMSFFMLFGCLDSLLLTAM) form a helical membrane-spanning segment. Topologically, residues 141 to 164 (AYDRFVAICHPLHYQFIMNPRLCG) are cytoplasmic. Residues 165 to 185 (LLVFLSVLISLFVSQLHNSVV) form a helical membrane-spanning segment. Topologically, residues 186–218 (LQLTYFKSVDISHFFCDPSQLLNLACSDTFTNN) are extracellular. A helical transmembrane segment spans residues 219 to 239 (IVMYFVGAISGFLPISGIFFS). The Cytoplasmic segment spans residues 240–266 (YYKIVSSILRMPSPGGKYKAFSTCGSH). A helical transmembrane segment spans residues 267-287 (LSVVCLFYGTGLGVYLSSAVS). The Extracellular segment spans residues 288-293 (LSPRKG). A helical transmembrane segment spans residues 294 to 314 (AVASIVYTVVTPMLNPFIYSL). Topologically, residues 315 to 331 (RNQDIKRAMWRLLRKTV) are cytoplasmic.

The protein belongs to the G-protein coupled receptor 1 family.

The protein resides in the cell membrane. Its function is as follows. Odorant receptor. This chain is Olfactory receptor 7E178, found in Mus musculus (Mouse).